Consider the following 583-residue polypeptide: Zinc finger protein 277 (583 aa).

2 C2H2-type zinc fingers span residues 351–375 (LQCL…KKQH) and 482–508 (HQCK…DTKH).

It belongs to the ZNF277 family. Interacts (via zinc-finger domains) with RPS2/40S ribosomal protein S2, perhaps as nascent RPS2 is synthesized during translation; the interaction is direct; the interaction is extra-ribosomal. Interaction with RPS2 competes with the binding of RPS2 to protein arginine methyltransferase PRMT3. Interacts with Polycomb group (PcG) complex protein BMI1. May be part of a complex including at least ZNF277, BMI1 and RNF2/RING2.

It localises to the nucleus. The protein localises to the cytoplasm. The protein resides in the nucleolus. It is found in the chromosome. In terms of biological role, probable transcription factor. Involved in modulation of cellular senescence; represses transcription of the tumor suppressor gene INK4A/ARF, perhaps acting via the Polycomb group (PcG) complex PRC1. This is Zinc finger protein 277 from Mus musculus (Mouse).